Consider the following 428-residue polypeptide: Phosphoribosylamine--glycine ligase (428 aa).

Residues Lys-109 to Gln-316 enclose the ATP-grasp domain. Val-135 to Ser-196 contacts ATP. Mg(2+) is bound by residues Glu-286 and Asn-288.

Belongs to the GARS family. It depends on Mg(2+) as a cofactor. Mn(2+) serves as cofactor.

It carries out the reaction 5-phospho-beta-D-ribosylamine + glycine + ATP = N(1)-(5-phospho-beta-D-ribosyl)glycinamide + ADP + phosphate + H(+). The protein operates within purine metabolism; IMP biosynthesis via de novo pathway; N(1)-(5-phospho-D-ribosyl)glycinamide from 5-phospho-alpha-D-ribose 1-diphosphate: step 2/2. This Yersinia pestis protein is Phosphoribosylamine--glycine ligase.